We begin with the raw amino-acid sequence, 464 residues long: ATP synthase subunit beta 2 (464 aa).

Residue Gly-147–Thr-154 coordinates ATP.

Belongs to the ATPase alpha/beta chains family. F-type ATPases have 2 components, CF(1) - the catalytic core - and CF(0) - the membrane proton channel. CF(1) has five subunits: alpha(3), beta(3), gamma(1), delta(1), epsilon(1). CF(0) has four main subunits: a(1), b(1), b'(1) and c(9-12).

Its subcellular location is the cell inner membrane. It carries out the reaction ATP + H2O + 4 H(+)(in) = ADP + phosphate + 5 H(+)(out). Produces ATP from ADP in the presence of a proton gradient across the membrane. The catalytic sites are hosted primarily by the beta subunits. The sequence is that of ATP synthase subunit beta 2 from Cereibacter sphaeroides (strain ATCC 17023 / DSM 158 / JCM 6121 / CCUG 31486 / LMG 2827 / NBRC 12203 / NCIMB 8253 / ATH 2.4.1.) (Rhodobacter sphaeroides).